Here is a 962-residue protein sequence, read N- to C-terminus: Leucine--tRNA ligase (962 aa).

The 'HIGH' region motif lies at 40-51 (PYPSGAGLHVGH). The short motif at 737 to 741 (KMSKS) is the 'KMSKS' region element. Lysine 740 contributes to the ATP binding site.

Belongs to the class-I aminoacyl-tRNA synthetase family.

Its subcellular location is the cytoplasm. The enzyme catalyses tRNA(Leu) + L-leucine + ATP = L-leucyl-tRNA(Leu) + AMP + diphosphate. The chain is Leucine--tRNA ligase from Flavobacterium psychrophilum (strain ATCC 49511 / DSM 21280 / CIP 103535 / JIP02/86).